Reading from the N-terminus, the 807-residue chain is Glycerol-3-phosphate acyltransferase (807 aa).

The HXXXXD motif signature appears at 309 to 314 (CHRSHM).

It belongs to the GPAT/DAPAT family.

It is found in the cell inner membrane. It catalyses the reaction sn-glycerol 3-phosphate + an acyl-CoA = a 1-acyl-sn-glycero-3-phosphate + CoA. The protein operates within phospholipid metabolism; CDP-diacylglycerol biosynthesis; CDP-diacylglycerol from sn-glycerol 3-phosphate: step 1/3. This is Glycerol-3-phosphate acyltransferase from Aeromonas hydrophila subsp. hydrophila (strain ATCC 7966 / DSM 30187 / BCRC 13018 / CCUG 14551 / JCM 1027 / KCTC 2358 / NCIMB 9240 / NCTC 8049).